The chain runs to 344 residues: Calcium homeostasis modulator protein 3 (344 aa).

At 1–20 (MDKFRMLFQHFQSSSESVMN) the chain is on the cytoplasmic side. A central pore region spans residues 9–36 (QHFQSSSESVMNGICLLLAAVTVKLYSS). The chain crosses the membrane as a helical span at residues 21 to 36 (GICLLLAAVTVKLYSS). Residues 37–48 (FDFNCPCLVHYN) are Extracellular-facing. Intrachain disulfides connect Cys-41/Cys-126 and Cys-43/Cys-157. The helical transmembrane segment at 49–71 (ALYGLGLLLTPPLALFLCGLLAN) threads the bilayer. Topologically, residues 72 to 98 (RQSVVMVEEWRRPAGHRRKDPGIIRYM) are cytoplasmic. A lipid anchor (S-palmitoyl cysteine) is attached at Cys-99. A helical membrane pass occupies residues 99 to 124 (CSSVLQRALAAPLVWILLALLDGKCF). Residues 125–176 (VCAFSSSVDPEKFLDFANMTPSQVQLFLAKVPCKEDELVRDSPARKAVSRYL) are Extracellular-facing. N-linked (GlcNAc...) asparagine glycosylation is present at Asn-142. The helical transmembrane segment at 177-202 (RCLSQAIGWSVTLLLIIAAFLARCLR) threads the bilayer. Residues Cys-200 and Cys-204 are each lipidated (S-palmitoyl cysteine). Residues 203-344 (PCFDQTVFLQ…GTRLSQHTDV (142 aa)) are Cytoplasmic-facing.

Belongs to the CALHM family. In terms of assembly, associates with CALHM1 as a pore-forming subunit in a hetero-hexameric channel complex. In terms of processing, N-glycosylated. Post-translationally, palmitoylated by ZDHHC3 and ZDHHC15. Palmitoylation positively regulates CALHM1:CALHM3 channel conductance. In terms of tissue distribution, specifically expressed in circumvallate taste bud cells.

It localises to the basolateral cell membrane. It catalyses the reaction ATP(in) = ATP(out). The enzyme catalyses Ca(2+)(in) = Ca(2+)(out). It carries out the reaction Na(+)(in) = Na(+)(out). The catalysed reaction is K(+)(in) = K(+)(out). It catalyses the reaction chloride(in) = chloride(out). Its function is as follows. Pore-forming subunit of gustatory voltage-gated ion channels required for sensory perception of sweet, bitter and umami tastes. With CALHM1 forms a fast-activating voltage-gated ATP-release channel in type II taste bud cells, ATP acting as a neurotransmitter to activate afferent neural gustatory pathways. Acts both as a voltage-gated and calcium-activated ion channel: mediates neuronal excitability in response to membrane depolarization and low extracellular Ca(2+) concentration. Has poor ion selectivity and forms a wide pore (around 14 Angstroms) that mediates permeation of small ions including Ca(2+), Na(+), K(+) and Cl(-), as well as larger ions such as ATP(4-). The polypeptide is Calcium homeostasis modulator protein 3 (Homo sapiens (Human)).